Here is a 320-residue protein sequence, read N- to C-terminus: L-lactate dehydrogenase (320 aa).

Residues 15-16 (FV), D37, K42, Y68, and 82-83 (GA) each bind NAD(+). Residues Q85, R91, and 123–126 (NPVD) each bind substrate. Residues 121–123 (ATN) and S146 contribute to the NAD(+) site. Substrate is bound at residue 151 to 154 (DSAR). Residues R156 and 168–172 (QNVHA) contribute to the beta-D-fructose 1,6-bisphosphate site. H178 serves as the catalytic Proton acceptor. The residue at position 223 (Y223) is a Phosphotyrosine. Substrate is bound at residue T232.

This sequence belongs to the LDH/MDH superfamily. LDH family. Homotetramer.

The protein resides in the cytoplasm. It carries out the reaction (S)-lactate + NAD(+) = pyruvate + NADH + H(+). Its pathway is fermentation; pyruvate fermentation to lactate; (S)-lactate from pyruvate: step 1/1. Its activity is regulated as follows. Allosterically activated by fructose 1,6-bisphosphate (FBP). Its function is as follows. Catalyzes the conversion of lactate to pyruvate. The chain is L-lactate dehydrogenase from Bacillus subtilis (strain 168).